A 326-amino-acid chain; its full sequence is MSNGYEDHMAEDCRGDIGRTNLIVNYLPQNMTQDELRSLFSSIGEVESAKLIRDKVAGHSLGYGFVNYVTAKDAERAINTLNGLRLQSKTIKVSYARPSSEVIKDANLYISGLPRTMTQKDVEDMFSRFGRIINSRVLVDQTTGLSRGVAFIRFDKRSEAEEAITSFNGHKPPGSSEPITVKFAANPNQNKNVALLSQLYHSPARRFGGPVHHQAQRFRFSPMGVDHMSGLSGVNVPGNASSGWCIFIYNLGQDADEGILWQMFGPFGAVTNVKVIRDFNTNKCKGFGFVTMTNYEEAAMAIASLNGYRLGDKILQVSFKTNKSHK.

At Ser2 the chain carries N-acetylserine. A Phosphoserine modification is found at Ser2. An RRM 1 domain is found at 20 to 98 (TNLIVNYLPQ…KTIKVSYARP (79 aa)). A phosphoserine mark is found at Ser100 and Ser158. Positions 106–186 (ANLYISGLPR…EPITVKFAAN (81 aa)) constitute an RRM 2 domain. A Glycyl lysine isopeptide (Lys-Gly) (interchain with G-Cter in SUMO2) cross-link involves residue Lys191. Residues Ser197 and Ser202 each carry the phosphoserine modification. At Arg206 the chain carries Omega-N-methylarginine. Position 217 is an asymmetric dimethylarginine; by CARM1; alternate (Arg217). Residue Arg217 is modified to Omega-N-methylarginine; alternate. 2 positions are modified to phosphoserine: Ser221 and Ser318. One can recognise an RRM 3 domain in the interval 244–322 (WCIFIYNLGQ…KILQVSFKTN (79 aa)).

It belongs to the RRM elav family. In terms of assembly, monomer and homodimer (in vitro). Interacts with ANP32A. Interacts with ZNF385A; the interaction is indirect and mRNA-dependent and may regulate p53/TP53 expression. Identified in a mRNP complex, at least composed of DHX9, DDX3X, ELAVL1, HNRNPU, IGF2BP1, ILF3, PABPC1, PCBP2, PTBP2, STAU1, STAU2, SYNCRIP and YBX1. Interacts with AGO1 and AGO2. Interacts with IGF2BP1; the interaction is enhanced by SEPIN14P20 peptide RBPR. Interacts with IGF2BP2 and IGF2BP3. Interacts with HNRNPL. Interacts with DHX36; this interaction occurs in a RNA-dependent manner. Interacts with ILF3; this interaction occurs in a RNA-dependent manner. Interacts with PLEKHN1. Interacts with SHFL; the interaction increases in presence of RNA. Interacts with YBX1; interaction recruits ELAVL1 on C5-methylcytosine (m5C)-containing mRNAs, thereby promoting mRNA stability. Interacts with FXR1. Phosphorylated by MAPKAPK2. Phosphorylated by PRKCD. Post-translationally, methylated at Arg-217 by CARM1 in macrophages in response to LPS challenge. As to expression, ubiquitous. Detected in brain, liver, thymus and muscle.

The protein resides in the cytoplasm. The protein localises to the nucleus. Its subcellular location is the stress granule. It localises to the P-body. In terms of biological role, RNA-binding protein that binds to the 3'-UTR region of mRNAs and increases their stability. Involved in embryonic stem cell (ESC) differentiation: preferentially binds mRNAs that are not methylated by N6-methyladenosine (m6A), stabilizing them, promoting ESC differentiation. Has also been shown to be capable of binding to m6A-containing mRNAs and contributes to MYC stability by binding to m6A-containing MYC mRNAs. Binds to poly-U elements and AU-rich elements (AREs) in the 3'-UTR of target mRNAs. Binds avidly to the AU-rich element in FOS and IL3/interleukin-3 mRNAs. In the case of the FOS AU-rich element, binds to a core element of 27 nucleotides that contain AUUUA, AUUUUA, and AUUUUUA motifs. Binds preferentially to the 5'-UUUU[AG]UUU-3' motif in vitro. With ZNF385A, binds the 3'-UTR of p53/TP53 mRNA to control their nuclear export induced by CDKN2A. Hence, may regulate p53/TP53 expression and mediate in part the CDKN2A anti-proliferative activity. May also bind with ZNF385A the CCNB1 mRNA. Increases the stability of the leptin mRNA harboring an AU-rich element (ARE) in its 3' UTR. This chain is ELAV-like protein 1 (ELAVL1), found in Homo sapiens (Human).